Reading from the N-terminus, the 193-residue chain is Molybdenum cofactor guanylyltransferase (193 aa).

Residues 8–10 (LAG), K21, D67, and D98 contribute to the GTP site. Mg(2+) is bound at residue D98.

Belongs to the MobA family. Monomer. Mg(2+) serves as cofactor.

Its subcellular location is the cytoplasm. The enzyme catalyses Mo-molybdopterin + GTP + H(+) = Mo-molybdopterin guanine dinucleotide + diphosphate. Transfers a GMP moiety from GTP to Mo-molybdopterin (Mo-MPT) cofactor (Moco or molybdenum cofactor) to form Mo-molybdopterin guanine dinucleotide (Mo-MGD) cofactor. The polypeptide is Molybdenum cofactor guanylyltransferase (Cereibacter sphaeroides (Rhodobacter sphaeroides)).